Here is a 108-residue protein sequence, read N- to C-terminus: UPF0060 membrane protein RSKD131_0092 (108 aa).

The next 4 helical transmembrane spans lie at 5–25, 32–52, 62–82, and 86–106; these read LAAY…VWAW, ALWL…LALT, AVYG…VEGV, and RWDM…LWAP.

It belongs to the UPF0060 family.

It localises to the cell inner membrane. In Cereibacter sphaeroides (strain KD131 / KCTC 12085) (Rhodobacter sphaeroides), this protein is UPF0060 membrane protein RSKD131_0092.